Here is a 185-residue protein sequence, read N- to C-terminus: Probable nicotinate-nucleotide adenylyltransferase (185 aa).

Belongs to the NadD family.

It catalyses the reaction nicotinate beta-D-ribonucleotide + ATP + H(+) = deamido-NAD(+) + diphosphate. Its pathway is cofactor biosynthesis; NAD(+) biosynthesis; deamido-NAD(+) from nicotinate D-ribonucleotide: step 1/1. Its function is as follows. Catalyzes the reversible adenylation of nicotinate mononucleotide (NaMN) to nicotinic acid adenine dinucleotide (NaAD). This Methylorubrum extorquens (strain PA1) (Methylobacterium extorquens) protein is Probable nicotinate-nucleotide adenylyltransferase.